Consider the following 1411-residue polypeptide: DNA-directed RNA polymerase subunit beta' (1411 aa).

Cys-70, Cys-72, Cys-85, and Cys-88 together coordinate Zn(2+). Residues Asp-458, Asp-460, and Asp-462 each contribute to the Mg(2+) site. Residues Cys-813, Cys-887, Cys-894, and Cys-897 each contribute to the Zn(2+) site. A disordered region spans residues 1391-1411; it reads AQAEVPELDGSSVTASDAAAD.

It belongs to the RNA polymerase beta' chain family. In terms of assembly, the RNAP catalytic core consists of 2 alpha, 1 beta, 1 beta' and 1 omega subunit. When a sigma factor is associated with the core the holoenzyme is formed, which can initiate transcription. The cofactor is Mg(2+). Requires Zn(2+) as cofactor.

It carries out the reaction RNA(n) + a ribonucleoside 5'-triphosphate = RNA(n+1) + diphosphate. Functionally, DNA-dependent RNA polymerase catalyzes the transcription of DNA into RNA using the four ribonucleoside triphosphates as substrates. The sequence is that of DNA-directed RNA polymerase subunit beta' from Verminephrobacter eiseniae (strain EF01-2).